The primary structure comprises 314 residues: Leucotoxin LukE (314 aa).

The signal sequence occupies residues 1 to 28 (MFKKKMLAASLSVGLIAPLASPIQESRA).

It belongs to the aerolysin family. Toxicity requires sequential binding and synergistic association of a class S and a class F component which form heterooligomeric complexes. LukE (class S) associates with LukD (class F). LukE can also associate with HlgB.

It localises to the secreted. Part of a bi-component leucotoxin that acts by forming pores in the membrane of the target cells. LukE-LukD is as effective as the Panton-Valentine leucocidin (PVL) for inducing dermonecrosis when injected in the rabbit skin, but not hemolytic and poorly leucotoxic on human blood cells compared to other leucotoxins expressed by S.aureus. This Staphylococcus aureus protein is Leucotoxin LukE (lukE).